A 26-amino-acid chain; its full sequence is Thrombin-like enzyme LmrSP-3 (26 aa).

This sequence belongs to the peptidase S1 family. Snake venom subfamily. As to expression, expressed by the venom gland.

It is found in the secreted. Functionally, thrombin-like snake venom serine protease that cleaves alpha-chain of fibrinogen (FGA) releases only fibrinopeptide A. Shows coagulant, esterase and amidase activities. This is Thrombin-like enzyme LmrSP-3 from Lachesis muta rhombeata (Bushmaster).